A 91-amino-acid chain; its full sequence is Small ribosomal subunit protein bS18 (91 aa).

The protein belongs to the bacterial ribosomal protein bS18 family. In terms of assembly, part of the 30S ribosomal subunit. Forms a tight heterodimer with protein bS6.

In terms of biological role, binds as a heterodimer with protein bS6 to the central domain of the 16S rRNA, where it helps stabilize the platform of the 30S subunit. This chain is Small ribosomal subunit protein bS18, found in Burkholderia lata (strain ATCC 17760 / DSM 23089 / LMG 22485 / NCIMB 9086 / R18194 / 383).